A 480-amino-acid polypeptide reads, in one-letter code: Glutamyl-tRNA(Gln) amidotransferase subunit A (480 aa).

Residues Lys-70 and Ser-145 each act as charge relay system in the active site. Ser-169 acts as the Acyl-ester intermediate in catalysis.

This sequence belongs to the amidase family. GatA subfamily. Heterotrimer of A, B and C subunits.

It carries out the reaction L-glutamyl-tRNA(Gln) + L-glutamine + ATP + H2O = L-glutaminyl-tRNA(Gln) + L-glutamate + ADP + phosphate + H(+). Functionally, allows the formation of correctly charged Gln-tRNA(Gln) through the transamidation of misacylated Glu-tRNA(Gln) in organisms which lack glutaminyl-tRNA synthetase. The reaction takes place in the presence of glutamine and ATP through an activated gamma-phospho-Glu-tRNA(Gln). This chain is Glutamyl-tRNA(Gln) amidotransferase subunit A, found in Lactobacillus delbrueckii subsp. bulgaricus (strain ATCC 11842 / DSM 20081 / BCRC 10696 / JCM 1002 / NBRC 13953 / NCIMB 11778 / NCTC 12712 / WDCM 00102 / Lb 14).